We begin with the raw amino-acid sequence, 86 residues long: Protein YwqI (86 aa).

The stretch at 57–83 (DYKKAVQKNIEDTKDNVDSLKEQDEAI) forms a coiled coil.

This chain is Protein YwqI (ywqI), found in Bacillus subtilis (strain 168).